The following is a 119-amino-acid chain: Large ribosomal subunit protein bL20c (119 aa).

It belongs to the bacterial ribosomal protein bL20 family.

Its subcellular location is the plastid. The protein resides in the chloroplast. Binds directly to 23S ribosomal RNA and is necessary for the in vitro assembly process of the 50S ribosomal subunit. It is not involved in the protein synthesizing functions of that subunit. The sequence is that of Large ribosomal subunit protein bL20c from Saccharum hybrid (Sugarcane).